The sequence spans 354 residues: Dual-specificity RNA methyltransferase RlmN (354 aa).

Residue glutamate 86 is the Proton acceptor of the active site. The 234-residue stretch at arginine 105–aspartate 338 folds into the Radical SAM core domain. Cysteine 112 and cysteine 343 form a disulfide bridge. Residues cysteine 119, cysteine 123, and cysteine 126 each coordinate [4Fe-4S] cluster. S-adenosyl-L-methionine-binding positions include glycine 169–glutamate 170, serine 201, serine 224–histidine 226, and asparagine 300. The active-site S-methylcysteine intermediate is cysteine 343.

It belongs to the radical SAM superfamily. RlmN family. [4Fe-4S] cluster serves as cofactor.

It is found in the cytoplasm. The enzyme catalyses adenosine(2503) in 23S rRNA + 2 reduced [2Fe-2S]-[ferredoxin] + 2 S-adenosyl-L-methionine = 2-methyladenosine(2503) in 23S rRNA + 5'-deoxyadenosine + L-methionine + 2 oxidized [2Fe-2S]-[ferredoxin] + S-adenosyl-L-homocysteine. It carries out the reaction adenosine(37) in tRNA + 2 reduced [2Fe-2S]-[ferredoxin] + 2 S-adenosyl-L-methionine = 2-methyladenosine(37) in tRNA + 5'-deoxyadenosine + L-methionine + 2 oxidized [2Fe-2S]-[ferredoxin] + S-adenosyl-L-homocysteine. Functionally, specifically methylates position 2 of adenine 2503 in 23S rRNA and position 2 of adenine 37 in tRNAs. m2A2503 modification seems to play a crucial role in the proofreading step occurring at the peptidyl transferase center and thus would serve to optimize ribosomal fidelity. In Campylobacter fetus subsp. fetus (strain 82-40), this protein is Dual-specificity RNA methyltransferase RlmN.